A 387-amino-acid polypeptide reads, in one-letter code: Succinate--CoA ligase [ADP-forming] subunit beta (387 aa).

Residues Lys46, Gly53–Gly55, Glu99, Cys102, and Glu107 contribute to the ATP site. Mg(2+) is bound by residues Asn196 and Asp210. Residues Asn261 and Gly318 to Val320 contribute to the substrate site.

The protein belongs to the succinate/malate CoA ligase beta subunit family. Heterotetramer of two alpha and two beta subunits. The cofactor is Mg(2+).

The enzyme catalyses succinate + ATP + CoA = succinyl-CoA + ADP + phosphate. It catalyses the reaction GTP + succinate + CoA = succinyl-CoA + GDP + phosphate. The protein operates within carbohydrate metabolism; tricarboxylic acid cycle; succinate from succinyl-CoA (ligase route): step 1/1. Its function is as follows. Succinyl-CoA synthetase functions in the citric acid cycle (TCA), coupling the hydrolysis of succinyl-CoA to the synthesis of either ATP or GTP and thus represents the only step of substrate-level phosphorylation in the TCA. The beta subunit provides nucleotide specificity of the enzyme and binds the substrate succinate, while the binding sites for coenzyme A and phosphate are found in the alpha subunit. This Campylobacter hominis (strain ATCC BAA-381 / DSM 21671 / CCUG 45161 / LMG 19568 / NCTC 13146 / CH001A) protein is Succinate--CoA ligase [ADP-forming] subunit beta.